The chain runs to 245 residues: MSAPQDRTDDGGVPVPVTPAGATGGAPAELPPSSPAGRGMFGDQGTGDVSGYGGLVRPQRSIEAATRPYGGYFDEVADALEEAYPAFGEAIEKVVVDRGELTLHIRPERIAEVCQVMRDDLSLRFELCSSVSGVDYLGADACRLHVVYQLTSMTYRRQVRLEAAVSAENPHLPSVTSVYPTADWQERETYDMFGVIFDGHPGLTRILMPDDWEGHPQRKDYPLGGVPVEYKGAEIPPPDRRRSYQ.

A compositionally biased stretch (basic and acidic residues) spans 1-10 (MSAPQDRTDD). 2 disordered regions span residues 1–54 (MSAP…GYGG) and 216–245 (PQRK…RSYQ). Low complexity predominate over residues 11-28 (GGVPVPVTPAGATGGAPA). Residues 39–54 (GMFGDQGTGDVSGYGG) show a composition bias toward gly residues.

Belongs to the complex I 30 kDa subunit family. As to quaternary structure, NDH-1 is composed of 14 different subunits. Subunits NuoB, C, D, E, F, and G constitute the peripheral sector of the complex.

The protein resides in the cell membrane. It carries out the reaction a quinone + NADH + 5 H(+)(in) = a quinol + NAD(+) + 4 H(+)(out). Its function is as follows. NDH-1 shuttles electrons from NADH, via FMN and iron-sulfur (Fe-S) centers, to quinones in the respiratory chain. The immediate electron acceptor for the enzyme in this species is believed to be a menaquinone. Couples the redox reaction to proton translocation (for every two electrons transferred, four hydrogen ions are translocated across the cytoplasmic membrane), and thus conserves the redox energy in a proton gradient. This Salinispora tropica (strain ATCC BAA-916 / DSM 44818 / JCM 13857 / NBRC 105044 / CNB-440) protein is NADH-quinone oxidoreductase subunit C.